The sequence spans 231 residues: MKILGRWLKLLLLGLIGLFLVWQLWLLGWVLLWGWVNPGETRFMAIRLAELRQKVPEAQLKQQWVPYERISIHLKRAIIAAEDAKFVDHEGFDWEGIQKAMEKNQKKGRFVAGGSTISQQLAKNLFLTPTKSYFRKVEEAIITLMLENLWSKKRIFEVYLNVIEWGNGVFGAEAAARHYYNTSAAQLGPEQAARLAGMVPNPRYYDRNRSAQGLGRKTAIILARMPAADVP.

The chain crosses the membrane as a helical span at residues 10-30 (LLLLGLIGLFLVWQLWLLGWV).

It belongs to the glycosyltransferase 51 family.

It localises to the cell inner membrane. It carries out the reaction [GlcNAc-(1-&gt;4)-Mur2Ac(oyl-L-Ala-gamma-D-Glu-L-Lys-D-Ala-D-Ala)](n)-di-trans,octa-cis-undecaprenyl diphosphate + beta-D-GlcNAc-(1-&gt;4)-Mur2Ac(oyl-L-Ala-gamma-D-Glu-L-Lys-D-Ala-D-Ala)-di-trans,octa-cis-undecaprenyl diphosphate = [GlcNAc-(1-&gt;4)-Mur2Ac(oyl-L-Ala-gamma-D-Glu-L-Lys-D-Ala-D-Ala)](n+1)-di-trans,octa-cis-undecaprenyl diphosphate + di-trans,octa-cis-undecaprenyl diphosphate + H(+). The protein operates within cell wall biogenesis; peptidoglycan biosynthesis. Its function is as follows. Peptidoglycan polymerase that catalyzes glycan chain elongation from lipid-linked precursors. This Dechloromonas aromatica (strain RCB) protein is Biosynthetic peptidoglycan transglycosylase.